The primary structure comprises 382 residues: Aminotransferase FGSG_00049 (382 aa).

Position 80 (Arg-80) interacts with pyridoxal 5'-phosphate. Position 181 is an N6-(pyridoxal phosphate)lysine (Lys-181). Pyridoxal 5'-phosphate is bound at residue Glu-217.

This sequence belongs to the class-IV pyridoxal-phosphate-dependent aminotransferase family. It depends on pyridoxal 5'-phosphate as a cofactor.

The protein operates within mycotoxin biosynthesis. Its function is as follows. Aminotransferase; part of the gene cluster that mediates the biosynthesis of gramillins A and B, bicyclic lipopeptides that induce cell death in maize leaves but not in wheat leaves. The nonribosomal peptide synthetase GRA1 incorporates respectively a glutamic adic (Glu), a leucine (Leu), a serine (Ser), a hydroxyglutamine (HOGln), a 2-amino decanoic acid, and 2 cysteins (CysB and CysA). The biosynthesis of 2-amino decanoic acid incorporated in gramillins could be initiated by a fatty acid synthase composed of the alpha and beta subunits FGSG_00036 and FGSG_11656. The cytochrome P450 monooxygenase FGSG_15680 could hydroxylate the fatty acid chain. Subsequent oxidation to the ketone by the oxidoreductase FGSG_00048 and transamination by aminotransferase FGSG_00049 could form 2-amino-decanoic acid. On the other hand, FGSG_15680 could also be responsible for the HO-modified glutamine at the gamma-position. Whether hydroxylation occurs on the fully assembled product or on the Gln residue prior to assembly into the gramillins requires further proof. The thioredoxin FGSG_00043 could also be required for the disulfide-bond formation between CysA and CysB. The specific involvement of the remaining proteins from the cluster is more difficult to discern, but could have broader regulatory (FGSG_00040 and FGSG_11657) or enzymatic functions (FGSG_00044 and FGSG_00045). The final C-domain of GRA1 does not possess the expected sequence of a termination CT domain, often implicated in macrocyclization and release of a cyclopeptidein fungal NRPs; and the thioesterase FGSG_00047 may act in concert with the terminal C-domain of GRA1 to catalyze the formation of the macrocyclic anhydride and release of the products. In Gibberella zeae (strain ATCC MYA-4620 / CBS 123657 / FGSC 9075 / NRRL 31084 / PH-1) (Wheat head blight fungus), this protein is Aminotransferase FGSG_00049.